Reading from the N-terminus, the 20-residue chain is Styelin-A (20 aa).

As to expression, hemocytes and pharyngeal tissues.

The protein localises to the secreted. Its function is as follows. Bactericidal against several Gram-positive and Gram-negative bacteria. This Styela clava (Sea squirt) protein is Styelin-A.